A 146-amino-acid polypeptide reads, in one-letter code: Leptin (146 aa).

Cys96 and Cys146 are disulfide-bonded.

It belongs to the leptin family.

It localises to the secreted. Its function is as follows. Key player in the regulation of energy balance and body weight control. Once released into the circulation, has central and peripheral effects by binding LEPR, found in many tissues, which results in the activation of several major signaling pathways. In the hypothalamus, acts as an appetite-regulating factor that induces a decrease in food intake and an increase in energy consumption by inducing anorexinogenic factors and suppressing orexigenic neuropeptides, also regulates bone mass and secretion of hypothalamo-pituitary-adrenal hormones. In the periphery, increases basal metabolism, influences reproductive function, regulates pancreatic beta-cell function and insulin secretion, is pro-angiogenic for endothelial cell and affects innate and adaptive immunity. In the arcuate nucleus of the hypothalamus, activates by depolarization POMC neurons inducing FOS and SOCS3 expression to release anorexigenic peptides and inhibits by hyperpolarization NPY neurons inducing SOCS3 with a consequent reduction on release of orexigenic peptides. In addition to its known satiety inducing effect, has a modulatory role in nutrient absorption. In the intestine, reduces glucose absorption by enterocytes by activating PKC and leading to a sequential activation of p38, PI3K and ERK signaling pathways which exerts an inhibitory effect on glucose absorption. Acts as a growth factor on certain tissues, through the activation of different signaling pathways increases expression of genes involved in cell cycle regulation such as CCND1, via JAK2-STAT3 pathway, or VEGFA, via MAPK1/3 and PI3K-AKT1 pathways. May also play an apoptotic role via JAK2-STAT3 pathway and up-regulation of BIRC5 expression. Pro-angiogenic, has mitogenic activity on vascular endothelial cells and plays a role in matrix remodeling by regulating the expression of matrix metalloproteinases (MMPs) and tissue inhibitors of metalloproteinases (TIMPs). In innate immunity, modulates the activity and function of neutrophils by increasing chemotaxis and the secretion of oxygen radicals. Increases phagocytosis by macrophages and enhances secretion of pro-inflammatory mediators. Increases cytotoxic ability of NK cells. Plays a pro-inflammatory role, in synergy with IL1B, by inducing NOS2 which promotes the production of IL6, IL8 and Prostaglandin E2, through a signaling pathway that involves JAK2, PI3K, MAP2K1/MEK1 and MAPK14/p38. In adaptive immunity, promotes the switch of memory T-cells towards T helper-1 cell immune responses. Increases CD4(+)CD25(-) T-cell proliferation and reduces autophagy during TCR (T-cell receptor) stimulation, through MTOR signaling pathway activation and BCL2 up-regulation. The protein is Leptin (LEP) of Ovis aries (Sheep).